The primary structure comprises 401 residues: LL-diaminopimelate aminotransferase (401 aa).

Residues Tyr-15 and Gly-42 each contribute to the substrate site. Pyridoxal 5'-phosphate is bound by residues Tyr-72, 108-109 (AK), Tyr-132, Asn-176, Tyr-207, and 235-237 (SFS). 3 residues coordinate substrate: Lys-109, Tyr-132, and Asn-176. Lys-238 carries the post-translational modification N6-(pyridoxal phosphate)lysine. Pyridoxal 5'-phosphate contacts are provided by Arg-246 and Asn-281. Asn-281 and Arg-377 together coordinate substrate.

The protein belongs to the class-I pyridoxal-phosphate-dependent aminotransferase family. LL-diaminopimelate aminotransferase subfamily. As to quaternary structure, homodimer. Pyridoxal 5'-phosphate is required as a cofactor.

The enzyme catalyses (2S,6S)-2,6-diaminopimelate + 2-oxoglutarate = (S)-2,3,4,5-tetrahydrodipicolinate + L-glutamate + H2O + H(+). It participates in amino-acid biosynthesis; L-lysine biosynthesis via DAP pathway; LL-2,6-diaminopimelate from (S)-tetrahydrodipicolinate (aminotransferase route): step 1/1. Its function is as follows. Involved in the synthesis of meso-diaminopimelate (m-DAP or DL-DAP), required for both lysine and peptidoglycan biosynthesis. Catalyzes the direct conversion of tetrahydrodipicolinate to LL-diaminopimelate. In Azobacteroides pseudotrichonymphae genomovar. CFP2, this protein is LL-diaminopimelate aminotransferase.